Consider the following 296-residue polypeptide: Cholesterol ring-cleaving hydrolase IpdA subunit (296 aa).

The protein belongs to the 3-oxoacid CoA-transferase subunit A family. In terms of assembly, heterotetramer composed of 2 IpdA subunits and 2 IpdB subunits.

The catalysed reaction is (3E)-2-(2-carboxylatoethyl)-3-methyl-6-oxocyclohex-1-ene-1-carboxyl-CoA + H2O = 6-methyl-3,7-dioxodecanedioyl-CoA. It participates in steroid metabolism; cholesterol degradation. Functionally, involved in the final steps of cholesterol and steroid degradation. Opens the last steroid ring of cholesterol by catalyzing the hydrolysis of (3E)-2-(2-carboxylatoethyl)-3-methyl-6-oxocyclohex-1-ene-1-carboxyl-CoA (COCHEA-CoA) to 6-methyl-3,7-dioxodecanedioyl-CoA (MeDODA-CoA). The sequence is that of Cholesterol ring-cleaving hydrolase IpdA subunit from Rhodococcus jostii (strain RHA1).